The chain runs to 234 residues: LexA repressor (234 aa).

Residues 26-46 (FDEMKEALDLASKSGIHRLIT) constitute a DNA-binding region (H-T-H motif). The interval 73 to 107 (ATAAAPPKGRGAFRPQVFEGGGAPPPAASPAAAAN) is disordered. Catalysis depends on for autocatalytic cleavage activity residues Ser-155 and Lys-192.

Belongs to the peptidase S24 family. Homodimer.

The enzyme catalyses Hydrolysis of Ala-|-Gly bond in repressor LexA.. Functionally, represses a number of genes involved in the response to DNA damage (SOS response), including recA and lexA. In the presence of single-stranded DNA, RecA interacts with LexA causing an autocatalytic cleavage which disrupts the DNA-binding part of LexA, leading to derepression of the SOS regulon and eventually DNA repair. The sequence is that of LexA repressor from Caulobacter vibrioides (strain ATCC 19089 / CIP 103742 / CB 15) (Caulobacter crescentus).